Consider the following 148-residue polypeptide: Large ribosomal subunit protein bL9 (148 aa).

The protein belongs to the bacterial ribosomal protein bL9 family.

Binds to the 23S rRNA. This chain is Large ribosomal subunit protein bL9, found in Caldicellulosiruptor bescii (strain ATCC BAA-1888 / DSM 6725 / KCTC 15123 / Z-1320) (Anaerocellum thermophilum).